Reading from the N-terminus, the 442-residue chain is Putative nucleotide-sugar transporter YMD8 (442 aa).

Topologically, residues 1-3 are cytoplasmic; it reads MNR. The chain crosses the membrane as a helical span at residues 4–24; that stretch reads TVFLAFVFGWYFCSIALSIYN. At 25–32 the chain is on the extracellular side; sequence RWMFDPKD. A helical membrane pass occupies residues 33–53; sequence GLGIGYPVLVTTFHQATLWLL. The Cytoplasmic portion of the chain corresponds to 54–76; that stretch reads SGIYIKLRHKPVKNVLRKNNGFN. Residues 77 to 97 form a helical membrane-spanning segment; it reads WSFFLKFLLPTAVASAGDIGL. Residues 98 to 107 are Extracellular-facing; it reads SNVSFQYVPL. An N-linked (GlcNAc...) asparagine glycan is attached at Asn-99. The helical transmembrane segment at 108–128 threads the bilayer; that stretch reads TIYTIIKSSSIAFVLLFGCIF. Residues 129-132 lie on the Cytoplasmic side of the membrane; it reads KLEK. Residues 133–153 traverse the membrane as a helical segment; sequence FHWKLALSVIIMFVGVALMVF. The Extracellular portion of the chain corresponds to 154-166; that stretch reads KPSDSTSTKNDQA. A helical membrane pass occupies residues 167 to 187; that stretch reads LVIFGSFLVLASSCLSGLRWV. Topologically, residues 188–254 are cytoplasmic; sequence YTQLMLRNNP…PIHTIHQLAP (67 aa). Phosphoserine is present on Ser-209. A helical membrane pass occupies residues 255 to 275; the sequence is IMGITLLLTSLLVEKPFPGIF. The Extracellular segment spans residues 276–301; it reads SSSIFRLDTSNGGVGTETTVLSIVRG. A helical transmembrane segment spans residues 302–322; sequence IVLLILPGFAVFLLTICEFSI. The Cytoplasmic segment spans residues 323 to 329; it reads LEQTPVL. The helical transmembrane segment at 330-350 threads the bilayer; sequence TVSIVGIVKELLTVIFGIIIL. Residues 351-355 lie on the Extracellular side of the membrane; sequence SERLS. Residues 356 to 376 traverse the membrane as a helical segment; sequence GFYNWLGMLIIMADVCYYNYF. Over 377–442 the chain is Cytoplasmic; sequence RYKQDLLQKY…QNVSRSSQQV (66 aa).

The protein belongs to the TPT transporter family. SLC35C subfamily.

It localises to the golgi apparatus membrane. Its subcellular location is the cytoplasmic vesicle. The protein resides in the COPI-coated vesicle membrane. The polypeptide is Putative nucleotide-sugar transporter YMD8 (YMD8) (Saccharomyces cerevisiae (strain ATCC 204508 / S288c) (Baker's yeast)).